A 177-amino-acid polypeptide reads, in one-letter code: ATP-dependent protease subunit HslV (177 aa).

Thr-6 is an active-site residue. Na(+)-binding residues include Gly-161, Cys-164, and Thr-167.

Belongs to the peptidase T1B family. HslV subfamily. In terms of assembly, a double ring-shaped homohexamer of HslV is capped on each side by a ring-shaped HslU homohexamer. The assembly of the HslU/HslV complex is dependent on binding of ATP.

The protein resides in the cytoplasm. The enzyme catalyses ATP-dependent cleavage of peptide bonds with broad specificity.. Allosterically activated by HslU binding. Protease subunit of a proteasome-like degradation complex believed to be a general protein degrading machinery. The polypeptide is ATP-dependent protease subunit HslV (Petrotoga mobilis (strain DSM 10674 / SJ95)).